The primary structure comprises 453 residues: Glutamyl-tRNA(Gln) amidotransferase subunit A (453 aa).

Residues Lys-55 and Ser-130 each act as charge relay system in the active site. Catalysis depends on Ser-154, which acts as the Acyl-ester intermediate.

This sequence belongs to the amidase family. GatA subfamily. As to quaternary structure, heterotrimer of A, B and C subunits.

The catalysed reaction is L-glutamyl-tRNA(Gln) + L-glutamine + ATP + H2O = L-glutaminyl-tRNA(Gln) + L-glutamate + ADP + phosphate + H(+). Functionally, allows the formation of correctly charged Gln-tRNA(Gln) through the transamidation of misacylated Glu-tRNA(Gln) in organisms which lack glutaminyl-tRNA synthetase. The reaction takes place in the presence of glutamine and ATP through an activated gamma-phospho-Glu-tRNA(Gln). The polypeptide is Glutamyl-tRNA(Gln) amidotransferase subunit A (Aliarcobacter butzleri (strain RM4018) (Arcobacter butzleri)).